A 408-amino-acid polypeptide reads, in one-letter code: Argininosuccinate synthase (408 aa).

Residues 12–20 (AYSGGLDTS) and Ala39 each bind ATP. 2 residues coordinate L-citrulline: Tyr92 and Ser97. Gly122 is an ATP binding site. L-aspartate contacts are provided by Thr124, Asn128, and Asp129. Asn128 contacts L-citrulline. L-citrulline is bound by residues Arg132, Ser183, Ser192, Glu268, and Tyr280.

The protein belongs to the argininosuccinate synthase family. Type 1 subfamily. Homotetramer.

The protein localises to the cytoplasm. It carries out the reaction L-citrulline + L-aspartate + ATP = 2-(N(omega)-L-arginino)succinate + AMP + diphosphate + H(+). It participates in amino-acid biosynthesis; L-arginine biosynthesis; L-arginine from L-ornithine and carbamoyl phosphate: step 2/3. The chain is Argininosuccinate synthase from Caulobacter vibrioides (strain ATCC 19089 / CIP 103742 / CB 15) (Caulobacter crescentus).